The chain runs to 1276 residues: MMAKTLQGTQQQYAASGFPTQQYPTSGWTQSAAEILQLDNMDQDTSVVRNIIHRKIVEYLNERKEFCNFDLSFLMEIGKCIDRHLFEKADSKIKYMDLETLRTRLNAIVNSASFRGSMFHWSASAASSKLNSQQLPVMEVPIYHDRVTPGPNNLPSCAYNVSSTQGYNQYENCMGAANFAHSLADKPKQMPERLANTIFTSCASTLPKCSPSIDVLHIGHIKEHFSGDAYQNDSSQPSTSGSSSSLSAVWDQTTCSSAMRTLPMDSFSTVNGQNLSTNNKSLYPTTGQGPLLQQYIECEMKQETWSRSLEQSDQSNITTGNRDLYHAQIHPYINGEHKRDRCIQMKEKLGHTSDHEGFSREKSSNLSNHFMHHQQGFMTNYGACSPVSKTVDRAEQTSNSTVSKPTSPASDGSSGKHYPAKRLKVDVPHLVHVNEMEASKEQQPAANETYASAETVQSEVTNSPTKSPCCTSLGDNIACTDNVHGMDMVRLSGSAVQTEEEFRRENSDIEMKDAKVDLLDQTLSGDSLRARKRRGASVLYALTSEELKDHLCTLNHDTSQSKVPTEELLSVEGLPDQNTCNLCGMERLLFEPPPRFCALCFKIINSTGSYYVEVENGNDKSSICGRCHHLSSAKAKYQKRFSYAETDAEAEWWVQCDKCKAWQHQICALFNPKIVDPEAEYTCAKCFLKEKDNEDVDSLEPSTILGARELPRTRLSDHIEQRLSERLVQERQQRAIASGKSVDEVPGVEGLTVRVVSSADRTLQVQPRFKDFFKKEQYPGEFPYKSKAILLFQKNEGVDVCLFAMYVQEYGSACPSPNQRHVYLAYIDSVKYFRPEIKSASGEALRTFVYHEILIGYLDFCKKRGFVSCSIWTCPSTKRDDYVLYCHPTIQKMPKSDKLRSWYQNLVKKAVKEGVVVERNTLYDFFLQPTNECKTNISAAWLPYCDNDFWPGEAERLLEKKDDDTSQKKETQLGRLLRVAKRDDRKGNLEDILLVHKLGERLRTMKEDFLMLCLQQFCKHCHHPIVSGSSWVCTSCKNFFLCERCYAEELNTPLKDRHPATTKQKHAFERIEEEPLPETDDVDPTMESKYFDSRIDFLKHCQDNQYQFDTLRRAKHSTMMILYHLHDSTCSSCHRAMDQCLAWRCLVCLGCNFCDSCYKQDGESLHIHKLRQKKDHHVLQKYTLQDYLEGLVHASRCFDRSCTSKLCLTLKKLFFHGVRCHTRARGGGGCHMCVFMWKLLFTHSLLCDNADCSAPRCRDIKAYIADRSMTDLSISG.

The segment at 391 to 421 (VDRAEQTSNSTVSKPTSPASDGSSGKHYPAK) is disordered. The span at 396-413 (QTSNSTVSKPTSPASDGS) shows a compositional bias: polar residues. The PHD-type zinc finger occupies 621 to 689 (SSICGRCHHL…EYTCAKCFLK (69 aa)). The region spanning 704–1130 (ILGARELPRT…ILYHLHDSTC (427 aa)) is the CBP/p300-type HAT domain. Acetyl-CoA is bound by residues 827–829 (IDS), 846–847 (RT), and Trp-902. A coiled-coil region spans residues 953 to 973 (EAERLLEKKDDDTSQKKETQL). ZZ-type zinc fingers lie at residues 1013–1076 (CLQQ…EEPL) and 1125–1187 (LHDS…LQDY). Residues Cys-1018, Cys-1021, Cys-1033, Cys-1036, Cys-1042, Cys-1045, His-1058, His-1066, Cys-1130, Cys-1133, Cys-1145, Cys-1148, Cys-1154, Cys-1157, His-1168, and His-1177 each coordinate Zn(2+). Residues 1177–1260 (HVLQKYTLQD…DCSAPRCRDI (84 aa)) form a TAZ-type zinc finger.

It is found in the nucleus. The enzyme catalyses L-lysyl-[protein] + acetyl-CoA = N(6)-acetyl-L-lysyl-[protein] + CoA + H(+). Acetyltransferase enzyme. Acetylates histones, giving a specific tag for transcriptional activation. The chain is Probable histone acetyltransferase HAC-like 3 from Oryza sativa subsp. japonica (Rice).